Reading from the N-terminus, the 925-residue chain is Protein PDC2 (925 aa).

An HTH CENPB-type domain is found at 63-138 (DANRLRKPNN…LSKMDVNISV (76 aa)). Disordered regions lie at residues 510–596 (DNNQ…RNSS), 674–693 (NEKA…SSTA), and 904–925 (PTGG…TGFF). The segment covering 513–537 (QNHLSMSQASHNPDYNSNHSNNAIE) has biased composition (polar residues). Positions 538–563 (NTNNRGSNNNNNNNGSSNNINDNDSS) are enriched in low complexity. Over residues 565-596 (KYLQQNTVDNSTKTGNPGQPNISSMESQRNSS) the composition is skewed to polar residues. The span at 674–686 (NEKAASDQNKSTD) shows a compositional bias: basic and acidic residues. Positions 904-916 (PTGGSNLPDSNNL) are enriched in polar residues.

Its function is as follows. Essential for the synthesis of pyruvate decarboxylase. May be important for a high basal level of PDC gene expression or play a positive role in the autoregulation control of PDC1 and PDC5. In Saccharomyces cerevisiae (strain ATCC 204508 / S288c) (Baker's yeast), this protein is Protein PDC2 (PDC2).